A 153-amino-acid polypeptide reads, in one-letter code: MATLEDKLQELLQPSVEDLGCELWGIECQRSGRFFTVRLYIDKKDGGVTVDDCADVSRQVSAVLDVEDPIADKYNLEVSSPGLNRPLFTLKQFENYIGQDISVHLRVPMFDRRKWQGKLEKIENDMLTLIVDNQPQVLVFGNIQKANVVPKFN.

The protein belongs to the RimP family.

The protein resides in the cytoplasm. Functionally, required for maturation of 30S ribosomal subunits. This is Ribosome maturation factor RimP from Histophilus somni (strain 2336) (Haemophilus somnus).